A 427-amino-acid polypeptide reads, in one-letter code: Neuronal pentraxin-2 (427 aa).

Residues 1–17 form the signal peptide; it reads MLALLAAGVAFAVVVLA. N144 and N185 each carry an N-linked (GlcNAc...) asparagine glycan. The 202-residue stretch at 219 to 420 folds into the Pentraxin (PTX) domain; sequence DAFKVSLPFR…GASKWPVETC (202 aa). An intrachain disulfide couples C249 to C309. Residues N273, E351, Q352, D353, and Q363 each contribute to the Ca(2+) site. N389 is a glycosylation site (N-linked (GlcNAc...) asparagine).

In terms of assembly, homooligomer or heterooligomer (probably pentamer) with neuronal pentraxin receptor (NPTXR). The cofactor is Ca(2+). Testis specific.

Its subcellular location is the cytoplasmic vesicle. It is found in the secretory vesicle. It localises to the acrosome lumen. Functionally, may be involved in binding, concentrating, and sorting soluble glycoproteins or glycolipids that are destined for the acrosome. The protein is Neuronal pentraxin-2 (NPTX2) of Cavia porcellus (Guinea pig).